The sequence spans 224 residues: Proline/serine-rich protein C17A5.10 (224 aa).

Residues methionine 1–serine 10 are compositionally biased toward pro residues. Positions methionine 1 to tyrosine 110 are disordered. Positions threonine 31–serine 52 are enriched in low complexity. Polar residues-rich tracts occupy residues leucine 53–serine 68, proline 77–tyrosine 94, and serine 101–tyrosine 110.

Belongs to the HUA1 family.

The protein localises to the cytoplasm. May be involved in assembly and disassembly of the actin cytoskeleton. In Schizosaccharomyces pombe (strain 972 / ATCC 24843) (Fission yeast), this protein is Proline/serine-rich protein C17A5.10.